We begin with the raw amino-acid sequence, 200 residues long: Casparian strip membrane protein 2 (200 aa).

Over 1–37 (MMKSDSVAIDVPESSSVAKRKAPFMANIRDENGGYKK) the chain is Cytoplasmic. The chain crosses the membrane as a helical span at residues 38-58 (GLAIFDFILRLGAIAAALGAA). The Extracellular portion of the chain corresponds to 59 to 88 (STMGTSDETLPFFTQFFQFNAGYDDFPTFQ). A helical membrane pass occupies residues 89–109 (FFVIAMAMVAGYLVLSLPFSI). Residues 110–121 (VSICRPHAAGPR) are Cytoplasmic-facing. The chain crosses the membrane as a helical span at residues 122–142 (ILLFILDTVALTLNAAAGAAA). The Extracellular segment spans residues 143 to 175 (ADIVYLAHNGNQTTNWLAICLQFGDFCREVSGS). N-linked (GlcNAc...) asparagine glycosylation is present at Asn-153. A helical membrane pass occupies residues 176–196 (VVASFASVVILMVLVVMSGLA). Residues 197–200 (LRRY) lie on the Cytoplasmic side of the membrane.

The protein belongs to the Casparian strip membrane proteins (CASP) family. Homodimer and heterodimers.

It is found in the cell membrane. Regulates membrane-cell wall junctions and localized cell wall deposition. Required for establishment of the Casparian strip membrane domain (CSD) and the subsequent formation of Casparian strips, a cell wall modification of the root endodermis that determines an apoplastic barrier between the intraorganismal apoplasm and the extraorganismal apoplasm and prevents lateral diffusion. The sequence is that of Casparian strip membrane protein 2 from Ricinus communis (Castor bean).